Reading from the N-terminus, the 207-residue chain is Large ribosomal subunit protein uL4 (207 aa).

The tract at residues 48–85 (THKVKNRSEVRGGGRKPWRQKGTGRARQGSIRSPQWRG) is disordered. The span at 60 to 71 (GGRKPWRQKGTG) shows a compositional bias: basic residues.

It belongs to the universal ribosomal protein uL4 family. As to quaternary structure, part of the 50S ribosomal subunit.

Its function is as follows. One of the primary rRNA binding proteins, this protein initially binds near the 5'-end of the 23S rRNA. It is important during the early stages of 50S assembly. It makes multiple contacts with different domains of the 23S rRNA in the assembled 50S subunit and ribosome. Forms part of the polypeptide exit tunnel. This is Large ribosomal subunit protein uL4 from Bacillus subtilis (strain 168).